A 776-amino-acid polypeptide reads, in one-letter code: Microtubule-associated protein tau (776 aa).

Over residues 1 to 26 (MAEPRQEFDVMEDHAGTYGLGDRKDQ) the composition is skewed to basic and acidic residues. Residues 1-591 (MAEPRQEFDV…PVPMPDLKNV (591 aa)) are disordered. Alanine 2 carries the N-acetylalanine modification. Residues tyrosine 18 and tyrosine 29 each carry the phosphotyrosine modification. Lysine 44 is covalently cross-linked (Glycyl lysine isopeptide (Lys-Gly) (interchain with G-Cter in ubiquitin)). Residues serine 46 and serine 61 each carry the phosphoserine modification. A compositionally biased stretch (polar residues) spans 61–71 (SETSDAKSTPT). Phosphothreonine occurs at positions 69, 71, and 111. 2 stretches are compositionally biased toward basic and acidic residues: residues 179-189 (EGGRHAPELLK) and 207-216 (GGKERPGIKE). Residues 217–228 (EVDEDRDVDESS) show a composition bias toward acidic residues. Basic and acidic residues predominate over residues 314–323 (EQAHSEEHLG). Over residues 325 to 340 (AAFPGAPGEGPEAQGP) the composition is skewed to low complexity. Basic and acidic residues-rich tracts occupy residues 344–356 (EDTK…EPSE) and 381–393 (KSKD…DKKA). Over residues 442–453 (VSSVTXRTGSSG) the composition is skewed to low complexity. Residues 455–466 (KEMKLKGADGKT) show a composition bias toward basic and acidic residues. Residue threonine 470 is modified to Phosphothreonine. Arginine 472 carries the post-translational modification Omega-N-methylarginine. Lysine 480 bears the N6,N6-dimethyllysine; alternate mark. At lysine 480 the chain carries N6-acetyllysine; alternate. Phosphothreonine occurs at positions 486, 492, and 498. 3 positions are modified to phosphoserine: serine 502, serine 526, and serine 530. Over residues 517 to 528 (KSERGEPPKSGD) the composition is skewed to basic and acidic residues. The segment covering 529–549 (RSGYSSPGSPGTPGSRSRTPS) has biased composition (low complexity). Phosphotyrosine is present on tyrosine 532. Phosphoserine occurs at positions 533, 534, and 537. Threonine 540 and threonine 547 each carry phosphothreonine. Position 549 is a phosphoserine (serine 549). Threonine 552 carries the phosphothreonine modification. Position 560 is an N6-acetyllysine (lysine 560). Threonine 566 carries the phosphothreonine modification. Serine 570 and serine 572 each carry phosphoserine. Tau/MAP repeat units lie at residues 579 to 609 (QTAP…GGGK), 610 to 640 (VQII…GGGS), 641 to 671 (VQIV…GGGQ), and 672 to 703 (VEVK…GGGN). Residue lysine 589 forms a Glycyl lysine isopeptide (Lys-Gly) (interchain with G-Cter in ubiquitin) linkage. Lysine 594 carries the post-translational modification N6-acetyllysine; alternate. Lysine 594 bears the N6-methyllysine; alternate mark. Lysine 594 participates in a covalent cross-link: Glycyl lysine isopeptide (Lys-Gly) (interchain with G-Cter in ubiquitin); alternate. Serine 597 is modified (phosphoserine). A Glycyl lysine isopeptide (Lys-Gly) (interchain with G-Cter in ubiquitin) cross-link involves residue lysine 602. Lysine 616 bears the N6-acetyllysine; alternate mark. A Glycyl lysine isopeptide (Lys-Gly) (interchain with G-Cter in ubiquitin); alternate cross-link involves residue lysine 616. Serine 620 and serine 624 each carry phosphoserine. Lysine 625 is subject to N6-acetyllysine. Serine 628 carries the post-translational modification Phosphoserine. Lysine 633 is modified (N6-acetyllysine; alternate). A Glycyl lysine isopeptide (Lys-Gly) (interchain with G-Cter in ubiquitin); alternate cross-link involves residue lysine 633. Serine 640 carries the phosphoserine modification. Lysine 646 is subject to N6,N6-dimethyllysine; alternate. N6-acetyllysine; alternate is present on residues lysine 646, lysine 652, and lysine 656. Residues lysine 646, lysine 652, and lysine 656 each participate in a glycyl lysine isopeptide (Lys-Gly) (interchain with G-Cter in ubiquitin); alternate cross-link. Serine 659 carries the post-translational modification Phosphoserine. N6-acetyllysine; alternate is present on residues lysine 666, lysine 678, and lysine 682. Glycyl lysine isopeptide (Lys-Gly) (interchain with G-Cter in ubiquitin); alternate cross-links involve residues lysine 666, lysine 678, and lysine 682. Arginine 684 carries the post-translational modification Omega-N-methylarginine. Residue serine 687 is modified to Phosphoserine. Lysine 688 participates in a covalent cross-link: Glycyl lysine isopeptide (Lys-Gly) (interchain with G-Cter in ubiquitin). Serine 691 carries the phosphoserine modification. Lysine 704 is modified (N6-acetyllysine; alternate). Residue lysine 704 forms a Glycyl lysine isopeptide (Lys-Gly) (interchain with G-Cter in ubiquitin); alternate linkage. Lysine 710 is covalently cross-linked (Glycyl lysine isopeptide (Lys-Gly) (interchain with G-Cter in ubiquitin)). Lysine 720 carries the post-translational modification N6-acetyllysine; alternate. Residue lysine 720 forms a Glycyl lysine isopeptide (Lys-Gly) (interchain with G-Cter in ubiquitin); alternate linkage. Position 729 is a phosphotyrosine (tyrosine 729). 2 positions are modified to phosphoserine: serine 731 and serine 735. The interval 733 to 752 (VVSGDTSPRHLSNVSSTGSI) is disordered. Over residues 736–751 (GDTSPRHLSNVSSTGS) the composition is skewed to polar residues. Phosphothreonine is present on threonine 738. 4 positions are modified to phosphoserine: serine 739, serine 744, serine 751, and serine 757. Threonine 762 carries the post-translational modification Phosphothreonine.

As to quaternary structure, interacts with MARK1, MARK2, MARK3 and MARK4. Interacts with SQSTM1 when polyubiquitinated. Interacts with PSMC2 through SQSTM1. Interacts with FKBP4. Binds to CSNK1D. Interacts with SGK1. Interacts with EPM2A; the interaction dephosphorylates MAPT at Ser-396. Interacts with PIN1. Interacts with LRRK2. Interacts with LRP1, leading to endocytosis; this interaction is reduced in the presence of LRPAP1/RAP. Post-translationally, polyubiquitinated. Requires functional TRAF6 and may provoke SQSTM1-dependent degradation by the proteasome. Phosphorylation at various serine and threonine residues in S-P or T-P motifs by proline-directed protein kinases (PDPK1, CDK1, CDK5, GSK3, MAPK) (a few sites per protein in interphase, more in mitosis), and at serine residues in K-X-G-S motifs by MAP/microtubule affinity-regulating kinase (MARK1, MARK2, MARK3 or MARK4), causing detachment from microtubules, and their disassembly. Phosphorylation at Ser-597 by BRSK1 and BRSK2 in neurons affects ability to bind microtubules and plays a role in neuron polarization. Phosphorylated by PHK. Dephosphorylation at several serine and threonine residues by the serine/threonine phosphatase PPP5C.

It localises to the cytoplasm. Its subcellular location is the cytosol. The protein resides in the cell membrane. The protein localises to the cytoskeleton. It is found in the cell projection. It localises to the axon. Its subcellular location is the dendrite. In terms of biological role, promotes microtubule assembly and stability, and might be involved in the establishment and maintenance of neuronal polarity. The C-terminus binds axonal microtubules while the N-terminus binds neural plasma membrane components, suggesting that tau functions as a linker protein between both. Axonal polarity is predetermined by tau localization (in the neuronal cell) in the domain of the cell body defined by the centrosome. The short isoforms allow plasticity of the cytoskeleton whereas the longer isoforms may preferentially play a role in its stabilization. In Hylobates lar (Lar gibbon), this protein is Microtubule-associated protein tau (MAPT).